A 20-amino-acid polypeptide reads, in one-letter code: Protein PR-L6 (20 aa).

This sequence belongs to the BetVI family.

The polypeptide is Protein PR-L6 (Lupinus luteus (European yellow lupine)).